Here is a 317-residue protein sequence, read N- to C-terminus: tRNA uridine(34) hydroxylase (317 aa).

Residues 129-223 (TDPEVLLIDT…YLEEVPEQES (95 aa)) form the Rhodanese domain. Cys-183 acts as the Cysteine persulfide intermediate in catalysis. The disordered stretch occupies residues 298–317 (AKARNQPHPIGRNYRLPSEA).

The protein belongs to the TrhO family.

It carries out the reaction uridine(34) in tRNA + AH2 + O2 = 5-hydroxyuridine(34) in tRNA + A + H2O. Catalyzes oxygen-dependent 5-hydroxyuridine (ho5U) modification at position 34 in tRNAs. In Pseudomonas syringae pv. tomato (strain ATCC BAA-871 / DC3000), this protein is tRNA uridine(34) hydroxylase.